An 87-amino-acid chain; its full sequence is U3-theraphotoxin-Hhn1n (87 aa).

Residues 1 to 24 (MVNMKASMFLTFAGLVLLFVVCYA) form the signal peptide. The propeptide occupies 25-52 (SESEEKEFPKEMLSSIFAVDNDFKQEER). Intrachain disulfides connect cysteine 54-cysteine 67, cysteine 61-cysteine 72, and cysteine 66-cysteine 79.

The protein belongs to the neurotoxin 10 (Hwtx-1) family. 51 (Hntx-8) subfamily. Hntx-8 sub-subfamily. Expressed by the venom gland.

Its subcellular location is the secreted. Its function is as follows. Weakly inhibits Kv11.1/KCNH2/ERG1, Kv1.2/KCNA2, Kv1.3/KCNA3, and Kv2.1/KCNB1. The polypeptide is U3-theraphotoxin-Hhn1n (Cyriopagopus hainanus (Chinese bird spider)).